Reading from the N-terminus, the 523-residue chain is Type 2 DNA topoisomerase 6 subunit B (523 aa).

Residues N48, D80, 101–102, 110–117, and K436 each bind ATP; these read SK and GQQGLGCS.

It belongs to the TOP6B family. In terms of assembly, homodimer. Heterotetramer of two Top6A and two Top6B chains.

It carries out the reaction ATP-dependent breakage, passage and rejoining of double-stranded DNA.. Relaxes both positive and negative superturns and exhibits a strong decatenase activity. This chain is Type 2 DNA topoisomerase 6 subunit B, found in Methanothermobacter thermautotrophicus (strain ATCC 29096 / DSM 1053 / JCM 10044 / NBRC 100330 / Delta H) (Methanobacterium thermoautotrophicum).